Here is a 544-residue protein sequence, read N- to C-terminus: Potential vesicular glutamate transporter vglu-3 (544 aa).

The Cytoplasmic segment spans residues M1 to Q49. Residues I50–V70 traverse the membrane as a helical segment. At A71–S104 the chain is on the extracellular side. N-linked (GlcNAc...) asparagine glycosylation occurs at N78. Residues F105–P125 form a helical membrane-spanning segment. At N126–K127 the chain is on the cytoplasmic side. The helical transmembrane segment at I128–N148 threads the bilayer. The Extracellular segment spans residues F149–D154. Residues I155 to M175 form a helical membrane-spanning segment. Topologically, residues H176–T193 are cytoplasmic. Residues T194 to V214 traverse the membrane as a helical segment. Topologically, residues S215 to W219 are extracellular. Residues S220–V240 traverse the membrane as a helical segment. The Cytoplasmic segment spans residues S241–S285. Residues A286–G306 traverse the membrane as a helical segment. Over N307–S323 the chain is Extracellular. A helical membrane pass occupies residues G324–L344. Over C345–R360 the chain is Cytoplasmic. A helical transmembrane segment spans residues K361–V381. Residues R382–P384 are Extracellular-facing. Residues V385–F405 traverse the membrane as a helical segment. The Cytoplasmic portion of the chain corresponds to N406–Y416. Residues A417 to V437 form a helical membrane-spanning segment. Over T438–K450 the chain is Extracellular. A helical transmembrane segment spans residues W451–A471. Over K472–S544 the chain is Cytoplasmic. A disordered region spans residues S501–S544. Residues N508–S544 show a composition bias toward basic and acidic residues.

This sequence belongs to the major facilitator superfamily. Sodium/anion cotransporter family. VGLUT subfamily.

Its subcellular location is the membrane. This chain is Potential vesicular glutamate transporter vglu-3 (vglu-3), found in Caenorhabditis elegans.